A 35-amino-acid polypeptide reads, in one-letter code: Photosystem II reaction center protein M (35 aa).

Residues 7–27 (GLLATILVILVPSIFLVILYV) form a helical membrane-spanning segment.

Belongs to the PsbM family. As to quaternary structure, PSII is composed of 1 copy each of membrane proteins PsbA, PsbB, PsbC, PsbD, PsbE, PsbF, PsbH, PsbI, PsbJ, PsbK, PsbL, PsbM, PsbT, PsbX, PsbY, PsbZ, Psb30/Ycf12, peripheral proteins PsbO, CyanoQ (PsbQ), PsbU, PsbV and a large number of cofactors. It forms dimeric complexes.

The protein resides in the cellular thylakoid membrane. Its function is as follows. One of the components of the core complex of photosystem II (PSII). PSII is a light-driven water:plastoquinone oxidoreductase that uses light energy to abstract electrons from H(2)O, generating O(2) and a proton gradient subsequently used for ATP formation. It consists of a core antenna complex that captures photons, and an electron transfer chain that converts photonic excitation into a charge separation. This subunit is found at the monomer-monomer interface. The protein is Photosystem II reaction center protein M of Synechococcus sp. (strain JA-3-3Ab) (Cyanobacteria bacterium Yellowstone A-Prime).